Here is a 46-residue protein sequence, read N- to C-terminus: Diuretic hormone (46 aa).

I46 is modified (isoleucine amide).

This sequence belongs to the sauvagine/corticotropin-releasing factor/urotensin I family.

The protein resides in the secreted. In terms of biological role, regulation of fluid secretion. Stimulates primary urine secretion by Malpighian tubules and causes a dose-dependent stimulation of cAMP levels in the tubules. This Acheta domesticus (House cricket) protein is Diuretic hormone.